The chain runs to 275 residues: Light-independent protochlorophyllide reductase iron-sulfur ATP-binding protein (275 aa).

Residues 12-17 (GIGKST) and Lys-41 contribute to the ATP site. Mg(2+) is bound at residue Ser-16. [4Fe-4S] cluster contacts are provided by Cys-97 and Cys-131. ATP is bound at residue 182–183 (NR).

This sequence belongs to the NifH/BchL/ChlL family. As to quaternary structure, homodimer. Protochlorophyllide reductase is composed of three subunits; BchL, BchN and BchB. Requires [4Fe-4S] cluster as cofactor.

It catalyses the reaction chlorophyllide a + oxidized 2[4Fe-4S]-[ferredoxin] + 2 ADP + 2 phosphate = protochlorophyllide a + reduced 2[4Fe-4S]-[ferredoxin] + 2 ATP + 2 H2O. It functions in the pathway porphyrin-containing compound metabolism; bacteriochlorophyll biosynthesis (light-independent). Functionally, component of the dark-operative protochlorophyllide reductase (DPOR) that uses Mg-ATP and reduced ferredoxin to reduce ring D of protochlorophyllide (Pchlide) to form chlorophyllide a (Chlide). This reaction is light-independent. The L component serves as a unique electron donor to the NB-component of the complex, and binds Mg-ATP. This chain is Light-independent protochlorophyllide reductase iron-sulfur ATP-binding protein, found in Chlorobium limicola (strain DSM 245 / NBRC 103803 / 6330).